Reading from the N-terminus, the 190-residue chain is Imidazoleglycerol-phosphate dehydratase (190 aa).

It belongs to the imidazoleglycerol-phosphate dehydratase family.

Its subcellular location is the cytoplasm. The enzyme catalyses D-erythro-1-(imidazol-4-yl)glycerol 3-phosphate = 3-(imidazol-4-yl)-2-oxopropyl phosphate + H2O. It functions in the pathway amino-acid biosynthesis; L-histidine biosynthesis; L-histidine from 5-phospho-alpha-D-ribose 1-diphosphate: step 6/9. The sequence is that of Imidazoleglycerol-phosphate dehydratase from Sulfurovum sp. (strain NBC37-1).